The primary structure comprises 362 residues: Chorismate synthase (362 aa).

R48 and R54 together coordinate NADP(+). FMN-binding positions include 125 to 127 (RSS), 238 to 239 (NA), G286, 301 to 305 (KPTSS), and R327.

The protein belongs to the chorismate synthase family. Homotetramer. The cofactor is FMNH2.

It carries out the reaction 5-O-(1-carboxyvinyl)-3-phosphoshikimate = chorismate + phosphate. It participates in metabolic intermediate biosynthesis; chorismate biosynthesis; chorismate from D-erythrose 4-phosphate and phosphoenolpyruvate: step 7/7. In terms of biological role, catalyzes the anti-1,4-elimination of the C-3 phosphate and the C-6 proR hydrogen from 5-enolpyruvylshikimate-3-phosphate (EPSP) to yield chorismate, which is the branch point compound that serves as the starting substrate for the three terminal pathways of aromatic amino acid biosynthesis. This reaction introduces a second double bond into the aromatic ring system. This Granulibacter bethesdensis (strain ATCC BAA-1260 / CGDNIH1) protein is Chorismate synthase.